A 299-amino-acid chain; its full sequence is Lipoyl synthase 2 (299 aa).

[4Fe-4S] cluster is bound by residues Cys-43, Cys-48, Cys-54, Cys-69, Cys-73, Cys-76, and Ser-294. Residues 55–283 (YAAGTATFLL…GAVARDLGFA (229 aa)) enclose the Radical SAM core domain.

It belongs to the radical SAM superfamily. Lipoyl synthase family. [4Fe-4S] cluster is required as a cofactor.

The protein resides in the cytoplasm. The catalysed reaction is [[Fe-S] cluster scaffold protein carrying a second [4Fe-4S](2+) cluster] + N(6)-octanoyl-L-lysyl-[protein] + 2 oxidized [2Fe-2S]-[ferredoxin] + 2 S-adenosyl-L-methionine + 4 H(+) = [[Fe-S] cluster scaffold protein] + N(6)-[(R)-dihydrolipoyl]-L-lysyl-[protein] + 4 Fe(3+) + 2 hydrogen sulfide + 2 5'-deoxyadenosine + 2 L-methionine + 2 reduced [2Fe-2S]-[ferredoxin]. It participates in protein modification; protein lipoylation via endogenous pathway; protein N(6)-(lipoyl)lysine from octanoyl-[acyl-carrier-protein]: step 2/2. Its function is as follows. Catalyzes the radical-mediated insertion of two sulfur atoms into the C-6 and C-8 positions of the octanoyl moiety bound to the lipoyl domains of lipoate-dependent enzymes, thereby converting the octanoylated domains into lipoylated derivatives. The polypeptide is Lipoyl synthase 2 (Parasynechococcus marenigrum (strain WH8102)).